Reading from the N-terminus, the 354-residue chain is Putrescine/cadaverine-binding protein (354 aa).

The N-terminal stretch at 1 to 20 is a signal peptide; sequence MMKKLLLVATLMAGAAQATA.

Belongs to the bacterial solute-binding protein 1 family.

It localises to the periplasm. Binds putrescine and cadaverine. This Pseudomonas aeruginosa (strain ATCC 15692 / DSM 22644 / CIP 104116 / JCM 14847 / LMG 12228 / 1C / PRS 101 / PAO1) protein is Putrescine/cadaverine-binding protein.